Here is a 228-residue protein sequence, read N- to C-terminus: 7-cyano-7-deazaguanine synthase (228 aa).

10–20 (FSGGQDSTTLA) lines the ATP pocket. Zn(2+) is bound by residues C190, C205, C208, and C211.

This sequence belongs to the QueC family. Zn(2+) is required as a cofactor.

The enzyme catalyses 7-carboxy-7-deazaguanine + NH4(+) + ATP = 7-cyano-7-deazaguanine + ADP + phosphate + H2O + H(+). It functions in the pathway purine metabolism; 7-cyano-7-deazaguanine biosynthesis. In terms of biological role, catalyzes the ATP-dependent conversion of 7-carboxy-7-deazaguanine (CDG) to 7-cyano-7-deazaguanine (preQ(0)). The polypeptide is 7-cyano-7-deazaguanine synthase (Helicobacter pylori (strain HPAG1)).